Here is a 109-residue protein sequence, read N- to C-terminus: N-alpha-acetyltransferase 38, NatC auxiliary subunit (109 aa).

A Sm domain is found at 23–101 (LARCKLENLL…VVSIEVETES (79 aa)).

It belongs to the snRNP Sm proteins family. Component of the N-terminal acetyltransferase C (NatC) complex.

It localises to the cytoplasm. It is found in the nucleus. Functionally, auxillary component of the N-terminal acetyltransferase C (NatC) complex which catalyzes acetylation of N-terminal methionine residues. N-terminal acetylation protects proteins from ubiquitination and degradation by the N-end rule pathway. In Danio rerio (Zebrafish), this protein is N-alpha-acetyltransferase 38, NatC auxiliary subunit (naa38).